Reading from the N-terminus, the 933-residue chain is MVDQPDSENLDHAVDALSKRYDPLGTECRWQKIWEEEGAFHPDPNDEGEPFSVVIPPPNVTGSLHMGHAFNTALIDTIVRFQRLQGKNVLCLPGTDHASIAVQTILEKQLKKEGLTRDELGRSAFLERAWAWKSESGGRIVEQLRRLGYSVDWKRERFTMDTRLSKAVSEAFVRLHQQGLIYRGEYLVNWCPASSSAVSDLEVETKEVDGYLWHFQYPLSKINDSNGIRFLEVATTRPETMLGDVAVAVNPSDSRYSNIVGQTLTLPFLGREIPVIADDHVDMDFGTGCVKVTPAHDPNDFAIGQRHNLRQITVMNKDGTMNAEAGPFEGLDRFEARKAVVKALEQKGLLTKVEPYRHSVPFSDRGKVPIEPLLSTQWFVRMEPMAERCRSHLGKDEPRFYPDRWAKVYRDWLTGIRDWCISRQLWWGHRIPAWFVVSETNNELTDDTPYIVALSEKDALLEAQKKYGTDAVLRQDEDVLDTWFSSGLWPFSTLGWPDKTNADLSRWYPTNTLVTGFDIIFFWVARMTMMAGAFTGKMPFADVYIHGLVRDEQNRKMSKSAGNGIDPLLLIDRYGTDALRFALVKEVAGAGQDIRIDYDRAKDTSATVEAARNFANKLWNATRFALINLGDTTFKETFDELEHNRLELSDQWILSKLSKVNNETAKRYKKYALGEAAKGLYEFAWNDFCDWYLELIKRRLNLGESPSEADLSNRKKSQIVMFKVLRELLVMMHPLMPHLTEELWHGVTGFSNKKLLALQSWPALDKDLIDEDLELSFSELFGAIRLVRNLRAEAGLKPSQRAPVRFVTKNQNLLNLLKKATQDIQALTRANKVEILHPREIFEESSGRSLAGVSGELEVLLPIEGLVDLQALRNRLQKDLSKAENELSILSKRLDNPSFVQKAPEKVIEECRLKLSDAEAQAELVRQRLLGLK.

The short motif at 58–68 is the 'HIGH' region element; the sequence is PNVTGSLHMGH. A 'KMSKS' region motif is present at residues 556 to 560; it reads KMSKS. An ATP-binding site is contributed by K559. 2 coiled-coil regions span residues 807–833 and 864–933; these read VTKN…ANKV and EGLV…LGLK.

It belongs to the class-I aminoacyl-tRNA synthetase family. ValS type 1 subfamily. Monomer.

The protein localises to the cytoplasm. It catalyses the reaction tRNA(Val) + L-valine + ATP = L-valyl-tRNA(Val) + AMP + diphosphate. Its function is as follows. Catalyzes the attachment of valine to tRNA(Val). As ValRS can inadvertently accommodate and process structurally similar amino acids such as threonine, to avoid such errors, it has a 'posttransfer' editing activity that hydrolyzes mischarged Thr-tRNA(Val) in a tRNA-dependent manner. This is Valine--tRNA ligase from Prochlorococcus marinus (strain SARG / CCMP1375 / SS120).